A 675-amino-acid chain; its full sequence is Methionine--tRNA ligase (675 aa).

A 'HIGH' region motif is present at residues 15-25 (PYANGSIHLGH). 4 residues coordinate Zn(2+): C146, C149, C159, and C162. A 'KMSKS' region motif is present at residues 332–336 (KMSKS). K335 lines the ATP pocket. The 103-residue stretch at 573–675 (DFAKIDMRIA…SGAKPGHQVK (103 aa)) folds into the tRNA-binding domain.

The protein belongs to the class-I aminoacyl-tRNA synthetase family. MetG type 1 subfamily. As to quaternary structure, homodimer. Zn(2+) serves as cofactor.

The protein localises to the cytoplasm. The enzyme catalyses tRNA(Met) + L-methionine + ATP = L-methionyl-tRNA(Met) + AMP + diphosphate. Its function is as follows. Is required not only for elongation of protein synthesis but also for the initiation of all mRNA translation through initiator tRNA(fMet) aminoacylation. In Proteus mirabilis (strain HI4320), this protein is Methionine--tRNA ligase.